A 432-amino-acid chain; its full sequence is Adenylosuccinate synthetase (432 aa).

GTP contacts are provided by residues 12–18 (GDEGKGK) and 40–42 (GHT). D13 (proton acceptor) is an active-site residue. D13 and G40 together coordinate Mg(2+). IMP-binding positions include 13–16 (DEGK), 38–41 (NAGH), T132, R146, Q226, T241, and R305. H41 (proton donor) is an active-site residue. 301 to 307 (TVTGRKR) is a substrate binding site. GTP contacts are provided by residues R307, 333-335 (KLD), and 415-417 (STS).

This sequence belongs to the adenylosuccinate synthetase family. Homodimer. Requires Mg(2+) as cofactor.

It localises to the cytoplasm. It carries out the reaction IMP + L-aspartate + GTP = N(6)-(1,2-dicarboxyethyl)-AMP + GDP + phosphate + 2 H(+). It functions in the pathway purine metabolism; AMP biosynthesis via de novo pathway; AMP from IMP: step 1/2. In terms of biological role, plays an important role in the de novo pathway of purine nucleotide biosynthesis. Catalyzes the first committed step in the biosynthesis of AMP from IMP. This is Adenylosuccinate synthetase from Sinorhizobium fredii (strain NBRC 101917 / NGR234).